Here is a 138-residue protein sequence, read N- to C-terminus: Large ribosomal subunit protein bL17 (138 aa).

This sequence belongs to the bacterial ribosomal protein bL17 family. In terms of assembly, part of the 50S ribosomal subunit. Contacts protein L32.

The chain is Large ribosomal subunit protein bL17 from Methylorubrum populi (strain ATCC BAA-705 / NCIMB 13946 / BJ001) (Methylobacterium populi).